Consider the following 66-residue polypeptide: Large ribosomal subunit protein bL35 (66 aa).

A disordered region spans residues 1 to 23; the sequence is MPKMKTHRASAKRFKRTANGGLK.

Belongs to the bacterial ribosomal protein bL35 family.

This is Large ribosomal subunit protein bL35 from Lactobacillus helveticus (strain DPC 4571).